The sequence spans 256 residues: MTEIKISKTEKKLRHYITKAIADYKLIEKGDKVMLCLSGGKDSFGLLKVLHGLIEDKTYDIDLHVYTLDQSQPGWDDSQLRKYLDNLGVSYEIETKNTYGVVIDKVPEGKTYCSLCSRLRRGNIYRYAKEHKMDKIILGHHRDDLIESLLMSILYQGQIKSMPPKFITQDGENTVIRPMVLVQERDLIEFAKEENFPIIPCNLCGSQENLKRKKVKKLIQDLAHENPKVPSNILNSLSNVLPSHLMDRDLLNIIQN.

Residues 38–43 (SGGKDS) carry the PP-loop motif motif. 3 residues coordinate [4Fe-4S] cluster: Cys113, Cys116, and Cys204.

Belongs to the TtcA family. As to quaternary structure, homodimer. It depends on Mg(2+) as a cofactor. Requires [4Fe-4S] cluster as cofactor.

The protein localises to the cytoplasm. It carries out the reaction cytidine(32) in tRNA + S-sulfanyl-L-cysteinyl-[cysteine desulfurase] + AH2 + ATP = 2-thiocytidine(32) in tRNA + L-cysteinyl-[cysteine desulfurase] + A + AMP + diphosphate + H(+). It participates in tRNA modification. Catalyzes the ATP-dependent 2-thiolation of cytidine in position 32 of tRNA, to form 2-thiocytidine (s(2)C32). The sulfur atoms are provided by the cysteine/cysteine desulfurase (IscS) system. In Francisella philomiragia subsp. philomiragia (strain ATCC 25017 / CCUG 19701 / FSC 153 / O#319-036), this protein is tRNA-cytidine(32) 2-sulfurtransferase 1.